Consider the following 427-residue polypeptide: Acyl-lipid 8-desaturase (427 aa).

The interval 1–24 (MGRGGDSSGQAHPAAELAVPSDRA) is disordered. Positions 36 to 84 (IVLYGKRVDVTKFQRTHPGGSKVFRIFQDRDATEQFESYHSKRAIKMME) constitute a Cytochrome b5 heme-binding domain. H52 and H75 together coordinate heme. A Histidine box-1 motif is present at residues 178–182 (HSVFK). A helical transmembrane segment spans residues 189 to 209 (VGWNNAAGYFLGFVQGYAVEW). Positions 213 to 218 (RHNTHH) match the Histidine box-2 motif. 2 helical membrane passes run 261 to 281 (VPVM…YVAM) and 286 to 306 (MLPQ…VFAG). The short motif at 373 to 377 (QTEHH) is the Histidine box-3 element.

It belongs to the fatty acid desaturase type 1 family. The cofactor is Fe(2+).

Its subcellular location is the membrane. Fatty acid desaturase that introduces a cis double bond at the 8-position in 20-carbon polyunsaturated fatty acids incorporated in a glycerolipid that contain a Delta(8) double bond to yield (20:4(8,11,14,17)). This is Acyl-lipid 8-desaturase from Rebecca salina (Marine microalga).